The following is a 276-amino-acid chain: Ubiquinone biosynthesis protein coq11, mitochondrial (276 aa).

It belongs to the NAD(P)-dependent epimerase/dehydratase family.

It localises to the mitochondrion. Its function is as follows. Acts in the coenzyme Q biosynthetic pathway. The sequence is that of Ubiquinone biosynthesis protein coq11, mitochondrial from Schizosaccharomyces pombe (strain 972 / ATCC 24843) (Fission yeast).